We begin with the raw amino-acid sequence, 155 residues long: Small ribosomal subunit protein uS7cz/uS7cy (155 aa).

It belongs to the universal ribosomal protein uS7 family. Part of the 30S ribosomal subunit.

Its subcellular location is the plastid. It localises to the chloroplast. Functionally, one of the primary rRNA binding proteins, it binds directly to 16S rRNA where it nucleates assembly of the head domain of the 30S subunit. In Anthoceros angustus (Hornwort), this protein is Small ribosomal subunit protein uS7cz/uS7cy (rps7-A).